Reading from the N-terminus, the 224-residue chain is UPF0173 metal-dependent hydrolase TK0141 (224 aa).

This sequence belongs to the UPF0173 family.

The protein is UPF0173 metal-dependent hydrolase TK0141 of Thermococcus kodakarensis (strain ATCC BAA-918 / JCM 12380 / KOD1) (Pyrococcus kodakaraensis (strain KOD1)).